The sequence spans 361 residues: Probable dual-specificity RNA methyltransferase RlmN (361 aa).

Catalysis depends on E104, which acts as the Proton acceptor. Residues H110–D343 enclose the Radical SAM core domain. Residues C117 and C348 are joined by a disulfide bond. [4Fe-4S] cluster is bound by residues C124, C128, and C131. S-adenosyl-L-methionine contacts are provided by residues G174–E175, S206, S229–H231, and N305. Catalysis depends on C348, which acts as the S-methylcysteine intermediate.

It belongs to the radical SAM superfamily. RlmN family. [4Fe-4S] cluster is required as a cofactor.

Its subcellular location is the cytoplasm. The catalysed reaction is adenosine(2503) in 23S rRNA + 2 reduced [2Fe-2S]-[ferredoxin] + 2 S-adenosyl-L-methionine = 2-methyladenosine(2503) in 23S rRNA + 5'-deoxyadenosine + L-methionine + 2 oxidized [2Fe-2S]-[ferredoxin] + S-adenosyl-L-homocysteine. It catalyses the reaction adenosine(37) in tRNA + 2 reduced [2Fe-2S]-[ferredoxin] + 2 S-adenosyl-L-methionine = 2-methyladenosine(37) in tRNA + 5'-deoxyadenosine + L-methionine + 2 oxidized [2Fe-2S]-[ferredoxin] + S-adenosyl-L-homocysteine. Its function is as follows. Specifically methylates position 2 of adenine 2503 in 23S rRNA and position 2 of adenine 37 in tRNAs. This is Probable dual-specificity RNA methyltransferase RlmN from Bacillus licheniformis (strain ATCC 14580 / DSM 13 / JCM 2505 / CCUG 7422 / NBRC 12200 / NCIMB 9375 / NCTC 10341 / NRRL NRS-1264 / Gibson 46).